Here is a 456-residue protein sequence, read N- to C-terminus: Equilibrative nucleoside transporter 2 (456 aa).

Residues 1–12 lie on the Cytoplasmic side of the membrane; that stretch reads MAHGNAPRDSYH. A helical transmembrane segment spans residues 13–29; sequence LVGISFFILGLGTLLPW. Residues 30 to 68 lie on the Extracellular side of the membrane; sequence NFFITAIPYFQGRLAGTNSSAETPSTNHTSPTDTFNFNN. N-linked (GlcNAc...) asparagine glycosylation is found at asparagine 47 and asparagine 56. A helical membrane pass occupies residues 69 to 93; sequence WVTLLSQLPLLLFTLLNSFLYQCIP. Topologically, residues 94 to 97 are cytoplasmic; the sequence is ESVR. Residues 98–116 form a helical membrane-spanning segment; the sequence is ILGSLLAILLLFALTAALV. The Extracellular segment spans residues 117-124; that stretch reads KVDLSPGL. A helical transmembrane segment spans residues 125–143; that stretch reads FFSITMASVWFINSFCAVL. Over 144 to 160 the chain is Cytoplasmic; that stretch reads QGSLFGQLGTMPSTYST. The helical transmembrane segment at 161–185 threads the bilayer; it reads LFLSGQGLAGIFAALAMLTSLASGV. Topologically, residues 186 to 192 are extracellular; sequence DPQTSAL. The helical transmembrane segment at 193–213 threads the bilayer; that stretch reads GYFITPCVGILLSIICYLSLP. The Cytoplasmic segment spans residues 214-291; the sequence is HLKFARYYLT…VFVVFRKIWL (78 aa). A Phosphoserine modification is found at serine 251. The chain crosses the membrane as a helical span at residues 292–311; that stretch reads TALCLVLVFTVTLSVFPAIT. Over 312–323 the chain is Extracellular; the sequence is AMVTTSSNSPGK. A helical transmembrane segment spans residues 324-342; sequence WSQFFNPICCFLLFNVMDW. At 343–359 the chain is on the cytoplasmic side; it reads LGRSLTSYFLWPDEDSQ. Residues 360 to 378 form a helical membrane-spanning segment; sequence LLPLLVCLRFLFVPLFMLC. Residues 379–393 are Extracellular-facing; sequence HVPQRARLPIIFWQD. A helical membrane pass occupies residues 394 to 413; that stretch reads AYFITFMLLFAISNGYFVSL. The Cytoplasmic portion of the chain corresponds to 414–431; that stretch reads TMCLAPRQVLPHEREVAG. The helical transmembrane segment at 432–452 threads the bilayer; the sequence is ALMTFFLALGLSCGASLSFLF. The Extracellular portion of the chain corresponds to 453–456; the sequence is KALL.

Belongs to the SLC29A/ENT transporter (TC 2.A.57) family. As to expression, expressed in squeletal muscles. Expressed in testis at the blood-brain-barrier.

It localises to the apical cell membrane. The protein resides in the basolateral cell membrane. It catalyses the reaction uridine(out) = uridine(in). The enzyme catalyses inosine(in) = inosine(out). The catalysed reaction is adenosine(in) = adenosine(out). It carries out the reaction thymidine(in) = thymidine(out). It catalyses the reaction hypoxanthine(out) = hypoxanthine(in). The enzyme catalyses adenine(out) = adenine(in). The catalysed reaction is cytidine(in) = cytidine(out). It carries out the reaction thymine(out) = thymine(in). It catalyses the reaction uracil(in) = uracil(out). The enzyme catalyses guanine(out) = guanine(in). The catalysed reaction is guanosine(in) = guanosine(out). Its function is as follows. Bidirectional uniporter involved in the facilitative transport of nucleosides and nucleobases, and contributes to maintaining their cellular homeostasis. Functions as a Na(+)-independent, passive transporter. Involved in the transport of nucleosides such as inosine, adenosine, uridine, thymidine, cytidine and guanosine. Also able to transport purine nucleobases (hypoxanthine, adenine, guanine) and pyrimidine nucleobases (thymine, uracil). Involved in nucleoside transport at basolateral membrane of kidney cells, allowing liver absorption of nucleoside metabolites. Mediates apical nucleoside uptake into Sertoli cells, thereby regulating the transport of nucleosides in testis across the blood-testis-barrier. Mediates both the influx and efflux of hypoxanthine in skeletal muscle microvascular endothelial cells to control the amount of intracellular hypoxanthine available for xanthine oxidase-mediated ROS production. The polypeptide is Equilibrative nucleoside transporter 2 (Rattus norvegicus (Rat)).